The primary structure comprises 275 residues: Chemotaxis protein methyltransferase Cher2 (275 aa).

Residues 1 to 275 (MSTGNLDFEQ…CSPGIIYQAK (275 aa)) enclose the CheR-type methyltransferase domain. Residues Asn73, Thr75, Arg79, Glu116, Asp145, 201-202 (NL), and 218-219 (RN) each bind S-adenosyl-L-methionine.

Monomer.

The catalysed reaction is L-glutamyl-[protein] + S-adenosyl-L-methionine = [protein]-L-glutamate 5-O-methyl ester + S-adenosyl-L-homocysteine. Methylation of the membrane-bound methyl-accepting chemotaxis proteins (MCP) to form gamma-glutamyl methyl ester residues in MCP. Methylates the McpS chemotaxis receptor. The chain is Chemotaxis protein methyltransferase Cher2 (cheR2) from Pseudomonas putida (strain ATCC 47054 / DSM 6125 / CFBP 8728 / NCIMB 11950 / KT2440).